The chain runs to 427 residues: D-inositol 3-phosphate glycosyltransferase 2 (427 aa).

Position 14 (His-14) interacts with 1D-myo-inositol 3-phosphate. Residues 20 to 21 and Gly-28 each bind UDP-N-acetyl-alpha-D-glucosamine; that span reads QP. Residues 25–30, Lys-83, Tyr-116, Thr-140, and Arg-160 each bind 1D-myo-inositol 3-phosphate; that span reads DAGGMN. UDP-N-acetyl-alpha-D-glucosamine-binding residues include Arg-234, Lys-239, and Val-300. Positions 309, 310, and 312 each coordinate Mg(2+). UDP-N-acetyl-alpha-D-glucosamine is bound by residues Glu-322 and Glu-330. Thr-336 is a Mg(2+) binding site.

It belongs to the glycosyltransferase group 1 family. MshA subfamily. As to quaternary structure, homodimer.

It carries out the reaction 1D-myo-inositol 3-phosphate + UDP-N-acetyl-alpha-D-glucosamine = 1D-myo-inositol 2-acetamido-2-deoxy-alpha-D-glucopyranoside 3-phosphate + UDP + H(+). Catalyzes the transfer of a N-acetyl-glucosamine moiety to 1D-myo-inositol 3-phosphate to produce 1D-myo-inositol 2-acetamido-2-deoxy-glucopyranoside 3-phosphate in the mycothiol biosynthesis pathway. The polypeptide is D-inositol 3-phosphate glycosyltransferase 2 (Catenulispora acidiphila (strain DSM 44928 / JCM 14897 / NBRC 102108 / NRRL B-24433 / ID139908)).